The primary structure comprises 569 residues: Proline--tRNA ligase (569 aa).

The protein belongs to the class-II aminoacyl-tRNA synthetase family. ProS type 1 subfamily. Homodimer.

Its subcellular location is the cytoplasm. The catalysed reaction is tRNA(Pro) + L-proline + ATP = L-prolyl-tRNA(Pro) + AMP + diphosphate. Functionally, catalyzes the attachment of proline to tRNA(Pro) in a two-step reaction: proline is first activated by ATP to form Pro-AMP and then transferred to the acceptor end of tRNA(Pro). As ProRS can inadvertently accommodate and process non-cognate amino acids such as alanine and cysteine, to avoid such errors it has two additional distinct editing activities against alanine. One activity is designated as 'pretransfer' editing and involves the tRNA(Pro)-independent hydrolysis of activated Ala-AMP. The other activity is designated 'posttransfer' editing and involves deacylation of mischarged Ala-tRNA(Pro). The misacylated Cys-tRNA(Pro) is not edited by ProRS. The protein is Proline--tRNA ligase of Campylobacter jejuni subsp. jejuni serotype O:23/36 (strain 81-176).